Reading from the N-terminus, the 295-residue chain is Threonine/homoserine exporter RhtA (295 aa).

The Cytoplasmic segment spans residues 1-9; it reads MPGSLRKMP. A helical membrane pass occupies residues 10–30; it reads VWLPIVILLVAMASIQGGASL. An EamA 1 domain is found at 30 to 135; that stretch reads LAKSLFPLVG…VLAVLGLWFL (106 aa). Residues 31–38 lie on the Periplasmic side of the membrane; the sequence is AKSLFPLV. The helical transmembrane segment at 39-59 threads the bilayer; the sequence is GAPGVTALRLALGTLILIAFF. At 60-71 the chain is on the cytoplasmic side; that stretch reads KPWRLRFAKEQR. The chain crosses the membrane as a helical span at residues 72 to 92; that stretch reads LPLLFYGVSLGGMNYLFYLSI. Glutamine 93 is a topological domain (periplasmic). A helical membrane pass occupies residues 94-114; it reads TVPLGIAVALEFTGPLAVALF. The Cytoplasmic segment spans residues 115 to 118; it reads SSRR. The chain crosses the membrane as a helical span at residues 119–139; the sequence is PVDFVWVVLAVLGLWFLLPLG. Topologically, residues 140-146 are periplasmic; sequence QDVSHVD. Residues 147 to 167 traverse the membrane as a helical segment; sequence LTGCALALGAGACWAIYILSG. An EamA 2 domain is found at 159-278; it reads CWAIYILSGQ…LGAIIAASMG (120 aa). Over 168–175 the chain is Cytoplasmic; it reads QRAGAEHG. The helical transmembrane segment at 176 to 196 threads the bilayer; sequence PATVAIGSLIAALIFVPIGAL. The Periplasmic portion of the chain corresponds to 197 to 200; it reads QAGE. The helical transmembrane segment at 201-221 threads the bilayer; sequence ALWHWSVIPLGLAVAILSTAL. At 222-237 the chain is on the cytoplasmic side; it reads PYSLEMIALTRLPTRT. A helical membrane pass occupies residues 238 to 258; sequence FGTLMSMEPALAAVSGMIFLG. The Periplasmic portion of the chain corresponds to 259-262; the sequence is ETLT. Residues 263–283 traverse the membrane as a helical segment; the sequence is PIQLLALGAIIAASMGSTLTV. Residues 284–295 are Cytoplasmic-facing; the sequence is RKESKIKELDIN.

Belongs to the drug/metabolite transporter (DMT) superfamily. 10 TMS drug/metabolite exporter (DME) (TC 2.A.7.3) family.

The protein localises to the cell inner membrane. Its function is as follows. Involved in the efflux of threonine and homoserine. The polypeptide is Threonine/homoserine exporter RhtA (rhtA) (Escherichia coli O157:H7).